A 166-amino-acid polypeptide reads, in one-letter code: Cyclic pyranopterin monophosphate synthase (166 aa).

Substrate contacts are provided by residues 83-85 (LCH) and 121-122 (ME). The active site involves aspartate 136.

This sequence belongs to the MoaC family. Homohexamer; trimer of dimers.

It carries out the reaction (8S)-3',8-cyclo-7,8-dihydroguanosine 5'-triphosphate = cyclic pyranopterin phosphate + diphosphate. It functions in the pathway cofactor biosynthesis; molybdopterin biosynthesis. Catalyzes the conversion of (8S)-3',8-cyclo-7,8-dihydroguanosine 5'-triphosphate to cyclic pyranopterin monophosphate (cPMP). The chain is Cyclic pyranopterin monophosphate synthase from Trichodesmium erythraeum (strain IMS101).